The following is a 251-amino-acid chain: Phosphate import ATP-binding protein PstB 2 (251 aa).

One can recognise an ABC transporter domain in the interval 5–246; that stretch reads ISAKDVHLSY…PKKQITSDYL (242 aa). 37–44 serves as a coordination point for ATP; that stretch reads GPSGCGKS.

Belongs to the ABC transporter superfamily. Phosphate importer (TC 3.A.1.7) family. In terms of assembly, the complex is composed of two ATP-binding proteins (PstB), two transmembrane proteins (PstC and PstA) and a solute-binding protein (PstS).

The protein resides in the cell membrane. The catalysed reaction is phosphate(out) + ATP + H2O = ADP + 2 phosphate(in) + H(+). Functionally, part of the ABC transporter complex PstSACB involved in phosphate import. Responsible for energy coupling to the transport system. The sequence is that of Phosphate import ATP-binding protein PstB 2 from Lactobacillus acidophilus (strain ATCC 700396 / NCK56 / N2 / NCFM).